We begin with the raw amino-acid sequence, 520 residues long: Glycosyl hydrolase family 109 protein 5 (520 aa).

The first 27 residues, 1-27 (MRTFKSLMISLCMGTTLCMCLPQTTTA), serve as a signal peptide directing secretion. Residues 77 to 78 (MR), aspartate 99, 147 to 150 (WLHH), 167 to 168 (EV), and asparagine 196 each bind NAD(+). Residues tyrosine 225, arginine 248, 260-263 (YATH), and tyrosine 338 contribute to the substrate site. Tyrosine 260 lines the NAD(+) pocket.

The protein belongs to the Gfo/Idh/MocA family. Glycosyl hydrolase 109 subfamily. NAD(+) is required as a cofactor.

Its function is as follows. Glycosidase. This Phocaeicola vulgatus (strain ATCC 8482 / DSM 1447 / JCM 5826 / CCUG 4940 / NBRC 14291 / NCTC 11154) (Bacteroides vulgatus) protein is Glycosyl hydrolase family 109 protein 5.